The primary structure comprises 484 residues: AMP nucleosidase (484 aa).

Belongs to the AMP nucleosidase family.

It carries out the reaction AMP + H2O = adenine + D-ribose 5-phosphate. Functionally, catalyzes the hydrolysis of the N-glycosidic bond of AMP to form adenine and ribose 5-phosphate. Involved in regulation of AMP concentrations. This Escherichia coli O157:H7 protein is AMP nucleosidase.